A 384-amino-acid chain; its full sequence is Probable L-tyrosine/L-aspartate decarboxylase (384 aa).

Lysine 233 is subject to N6-(pyridoxal phosphate)lysine.

The protein belongs to the group II decarboxylase family. MfnA subfamily. It depends on pyridoxal 5'-phosphate as a cofactor.

It carries out the reaction L-tyrosine + H(+) = tyramine + CO2. It catalyses the reaction L-aspartate + H(+) = beta-alanine + CO2. Its pathway is cofactor biosynthesis; methanofuran biosynthesis. The protein operates within cofactor biosynthesis; coenzyme A biosynthesis. Catalyzes the decarboxylation of L-tyrosine to produce tyramine for methanofuran biosynthesis. Can also catalyze the decarboxylation of L-aspartate to produce beta-alanine for coenzyme A (CoA) biosynthesis. The chain is Probable L-tyrosine/L-aspartate decarboxylase from Methanococcus maripaludis (strain DSM 14266 / JCM 13030 / NBRC 101832 / S2 / LL).